We begin with the raw amino-acid sequence, 257 residues long: tRNA pseudouridine synthase A (257 aa).

Asp-52 serves as the catalytic Nucleophile. Tyr-111 lines the substrate pocket.

This sequence belongs to the tRNA pseudouridine synthase TruA family. In terms of assembly, homodimer.

It carries out the reaction uridine(38/39/40) in tRNA = pseudouridine(38/39/40) in tRNA. Functionally, formation of pseudouridine at positions 38, 39 and 40 in the anticodon stem and loop of transfer RNAs. The polypeptide is tRNA pseudouridine synthase A (Cereibacter sphaeroides (strain ATCC 17025 / ATH 2.4.3) (Rhodobacter sphaeroides)).